Reading from the N-terminus, the 198-residue chain is Imidazoleglycerol-phosphate dehydratase (198 aa).

It belongs to the imidazoleglycerol-phosphate dehydratase family.

The protein resides in the cytoplasm. The enzyme catalyses D-erythro-1-(imidazol-4-yl)glycerol 3-phosphate = 3-(imidazol-4-yl)-2-oxopropyl phosphate + H2O. It functions in the pathway amino-acid biosynthesis; L-histidine biosynthesis; L-histidine from 5-phospho-alpha-D-ribose 1-diphosphate: step 6/9. The chain is Imidazoleglycerol-phosphate dehydratase from Nitratidesulfovibrio vulgaris (strain DP4) (Desulfovibrio vulgaris).